The chain runs to 415 residues: uncharacterized protein (415 aa).

Zn(2+) is bound at residue His-88. Asp-90 is a catalytic residue. Asp-121 contributes to the Zn(2+) binding site. The active-site Proton acceptor is Glu-155. The Zn(2+) site is built by Glu-156, Asp-185, and His-392.

This sequence belongs to the peptidase M20A family. Requires Zn(2+) as cofactor. The cofactor is Co(2+).

This is an uncharacterized protein from Methanococcus maripaludis (strain DSM 14266 / JCM 13030 / NBRC 101832 / S2 / LL).